The primary structure comprises 542 residues: CTP synthase (542 aa).

The tract at residues 1 to 265 (MARYIFITGG…DSEVLCAFGI (265 aa)) is amidoligase domain. A CTP-binding site is contributed by Ser-13. Ser-13 lines the UTP pocket. 14-19 (SLGKGI) is an ATP binding site. Tyr-54 provides a ligand contact to L-glutamine. Asp-71 contributes to the ATP binding site. Positions 71 and 139 each coordinate Mg(2+). CTP contacts are provided by residues 146–148 (DIE), 186–191 (KTKPTQ), and Lys-222. Residues 186 to 191 (KTKPTQ) and Lys-222 contribute to the UTP site. The Glutamine amidotransferase type-1 domain maps to 291–541 (TIAVVGKYTG…IEATVEQSRL (251 aa)). Ala-353 is an L-glutamine binding site. Cys-380 acts as the Nucleophile; for glutamine hydrolysis in catalysis. L-glutamine contacts are provided by residues 381–384 (FGMQ), Glu-404, and Arg-469. Catalysis depends on residues His-514 and Glu-516.

The protein belongs to the CTP synthase family. Homotetramer.

The catalysed reaction is UTP + L-glutamine + ATP + H2O = CTP + L-glutamate + ADP + phosphate + 2 H(+). The enzyme catalyses L-glutamine + H2O = L-glutamate + NH4(+). It carries out the reaction UTP + NH4(+) + ATP = CTP + ADP + phosphate + 2 H(+). It functions in the pathway pyrimidine metabolism; CTP biosynthesis via de novo pathway; CTP from UDP: step 2/2. With respect to regulation, allosterically activated by GTP, when glutamine is the substrate; GTP has no effect on the reaction when ammonia is the substrate. The allosteric effector GTP functions by stabilizing the protein conformation that binds the tetrahedral intermediate(s) formed during glutamine hydrolysis. Inhibited by the product CTP, via allosteric rather than competitive inhibition. Functionally, catalyzes the ATP-dependent amination of UTP to CTP with either L-glutamine or ammonia as the source of nitrogen. Regulates intracellular CTP levels through interactions with the four ribonucleotide triphosphates. The chain is CTP synthase from Bartonella quintana (strain Toulouse) (Rochalimaea quintana).